The chain runs to 161 residues: Large ribosomal subunit protein uL30m (161 aa).

The N-terminal 34 residues, 1-34, are a transit peptide targeting the mitochondrion; sequence MAGILRLVVQWPPGRLQTVTKGVESLICTDWIRH.

This sequence belongs to the universal ribosomal protein uL30 family. As to quaternary structure, component of the mitochondrial large ribosomal subunit (mt-LSU). Mature mammalian 55S mitochondrial ribosomes consist of a small (28S) and a large (39S) subunit. The 28S small subunit contains a 12S ribosomal RNA (12S mt-rRNA) and 30 different proteins. The 39S large subunit contains a 16S rRNA (16S mt-rRNA), a copy of mitochondrial valine transfer RNA (mt-tRNA(Val)), which plays an integral structural role, and 52 different proteins.

It is found in the mitochondrion. This Homo sapiens (Human) protein is Large ribosomal subunit protein uL30m (MRPL30).